The primary structure comprises 88 residues: Homeobox protein knotted-1-like 2 (88 aa).

The ELK domain maps to 4-24 (ELKHELKQGYRDKLVDIREEI). The homeobox; TALE-type DNA-binding region spans 25-88 (LRKRRAGKLP…NQRKRNWHNN (64 aa)).

It belongs to the TALE/KNOX homeobox family. As to expression, expressed in all tissues examined. Highest expression in leaves.

The protein resides in the nucleus. This chain is Homeobox protein knotted-1-like 2 (KNOX2), found in Zea mays (Maize).